A 292-amino-acid chain; its full sequence is Coiled-coil domain-containing protein 192 (292 aa).

A disordered region spans residues 28-55 (SVVPESDTSERSSMTSGSSESDIPQENK). Low complexity predominate over residues 38 to 49 (RSSMTSGSSESD). 2 coiled-coil regions span residues 65–174 (QMAF…LATA) and 222–258 (IMELSTQVSLQTERITQLKEVLEEKERKIQQLEAERS). Over residues 251 to 267 (QQLEAERSPHPPQEVKD) the composition is skewed to basic and acidic residues. Residues 251–292 (QQLEAERSPHPPQEVKDPPGCLPEAPVFSTHDIPPVVSDENL) are disordered.

The sequence is that of Coiled-coil domain-containing protein 192 from Homo sapiens (Human).